The sequence spans 616 residues: Chaperone protein HscA (616 aa).

The protein belongs to the heat shock protein 70 family.

Chaperone involved in the maturation of iron-sulfur cluster-containing proteins. Has a low intrinsic ATPase activity which is markedly stimulated by HscB. Involved in the maturation of IscU. This Salmonella arizonae (strain ATCC BAA-731 / CDC346-86 / RSK2980) protein is Chaperone protein HscA.